The following is a 273-amino-acid chain: Putative phosphoenolpyruvate synthase regulatory protein (273 aa).

Glycine 153 to threonine 160 provides a ligand contact to ADP.

Belongs to the pyruvate, phosphate/water dikinase regulatory protein family. PSRP subfamily.

It carries out the reaction [pyruvate, water dikinase] + ADP = [pyruvate, water dikinase]-phosphate + AMP + H(+). It catalyses the reaction [pyruvate, water dikinase]-phosphate + phosphate + H(+) = [pyruvate, water dikinase] + diphosphate. Bifunctional serine/threonine kinase and phosphorylase involved in the regulation of the phosphoenolpyruvate synthase (PEPS) by catalyzing its phosphorylation/dephosphorylation. The chain is Putative phosphoenolpyruvate synthase regulatory protein from Yersinia enterocolitica serotype O:8 / biotype 1B (strain NCTC 13174 / 8081).